We begin with the raw amino-acid sequence, 280 residues long: Orotidine 5'-phosphate decarboxylase (280 aa).

Catalysis depends on Lys96, which acts as the Proton donor.

This sequence belongs to the OMP decarboxylase family. Type 2 subfamily.

It catalyses the reaction orotidine 5'-phosphate + H(+) = UMP + CO2. It functions in the pathway pyrimidine metabolism; UMP biosynthesis via de novo pathway; UMP from orotate: step 2/2. In Parabacteroides distasonis (strain ATCC 8503 / DSM 20701 / CIP 104284 / JCM 5825 / NCTC 11152), this protein is Orotidine 5'-phosphate decarboxylase.